The following is a 370-amino-acid chain: Mitogen-activated protein kinase 3 (370 aa).

One can recognise a Protein kinase domain in the interval 38–324 (RPPIIPIGRG…VEQALNHQYL (287 aa)). ATP contacts are provided by residues 44 to 52 (IGRGAYGIV) and lysine 67. Catalysis depends on aspartate 164, which acts as the Proton acceptor. Threonine 196 carries the phosphothreonine modification. The TXY motif lies at 196-198 (TEY). A Phosphotyrosine modification is found at tyrosine 198. Phosphothreonine is present on threonine 201.

It belongs to the protein kinase superfamily. CMGC Ser/Thr protein kinase family. MAP kinase subfamily. In terms of assembly, interacts with DSPTP1B/MKP2, NDPK2 and VIP1. The interaction with DSPTP1B/MKP2 is repressed by fungal elicitation. Binds to LIP5. Interacts with VQ4. Interacts with RACK1A, RACK1B and RACK1C. Interacts with FLZ9. Interacts with MKK5. Dually phosphorylated on Thr-196 and Tyr-198, which activates the enzyme. Dephosphorylated by DSPTP1B/MKP2.

Its subcellular location is the cytoplasm. It localises to the nucleus. It is found in the cell cortex. It carries out the reaction L-seryl-[protein] + ATP = O-phospho-L-seryl-[protein] + ADP + H(+). It catalyses the reaction L-threonyl-[protein] + ATP = O-phospho-L-threonyl-[protein] + ADP + H(+). Its activity is regulated as follows. Activated by threonine and tyrosine phosphorylation. Activated by MAP kinase kinases MKK4, MKK5, MKK7 and MKK9. Activated in response to hydrogen peroxide, ozone, salt stress and flagellin bacterial elicitor. Triggered by Agrobacterium upon T-DNA transfer. Repressed by DSPTP1B/MKP2-mediated dephosphorylation. Its function is as follows. Involved in oxidative stress-mediated signaling cascade (such as ozone). Involved in the innate immune MAP kinase signaling cascade (MEKK1, MKK4/MKK5 and MPK3/MPK6) downstream of bacterial flagellin receptor FLS2. May be involved in hypersensitive response (HR)-mediated signaling cascade by modulating LIP5 phosphorylation and subsequent multivesicular bodies (MVBs) trafficking. May phosphorylate regulators of WRKY transcription factors. Mediates the phosphorylation of VIP1 and subsequent stress genes transcription in response to Agrobacterium. MKK9-MPK3/MPK6 module phosphorylates and activates EIN3, leading to the promotion of EIN3-mediated transcription in ethylene signaling. MPK3/MPK6 cascade regulates camalexin synthesis through transcriptional regulation of the biosynthetic genes after pathogen infection. YDA-MKK4/MKK5-MPK3/MPK6 module regulates stomatal cell fate before the guard mother cell (GMC) is specified. When activated, reinforces the feedback loop by phosphorylating BASL, and inhibits stomatal fate by phosphorylating SPCH. This MAPK cascade also functions downstream of the ER receptor in regulating coordinated local cell proliferation, which shapes the morphology of plant organs. The protein is Mitogen-activated protein kinase 3 of Arabidopsis thaliana (Mouse-ear cress).